We begin with the raw amino-acid sequence, 258 residues long: Pyridoxal phosphate homeostasis protein (258 aa).

Position 47 is an N6-(pyridoxal phosphate)lysine (Lys47).

Belongs to the pyridoxal phosphate-binding protein YggS/PROSC family.

In terms of biological role, pyridoxal 5'-phosphate (PLP)-binding protein, which is involved in PLP homeostasis. In Mycobacterium bovis (strain ATCC BAA-935 / AF2122/97), this protein is Pyridoxal phosphate homeostasis protein.